The chain runs to 144 residues: Protein cornichon (144 aa).

Over 1–10 (MAFNFTAFTY) the chain is Lumenal. The tract at residues 1–57 (MAFNFTAFTYIVALIGDAFLIFFAIFHVIAFDELKTDYKNPIDQCNSLNPLVLPEYL) is interaction with grk. The helical transmembrane segment at 11 to 31 (IVALIGDAFLIFFAIFHVIAF) threads the bilayer. Over 32–56 (DELKTDYKNPIDQCNSLNPLVLPEY) the chain is Cytoplasmic. The helical transmembrane segment at 57–77 (LLHLFLNLLFLFCGEWYSLCL) threads the bilayer. The Lumenal portion of the chain corresponds to 78 to 122 (NIPLIAYHIWRYKNRPLMSGPGLYDPTTVLKTDTLSRNLREGWIK). The helical transmembrane segment at 123-143 (LAVYLISFFYYIYGMVYSLIS) threads the bilayer. Threonine 144 is a topological domain (cytoplasmic).

This sequence belongs to the cornichon family. Interacts with grk.

The protein resides in the endoplasmic reticulum membrane. Acts as a cargo receptor necessary for the transportation of gurken (grk) to a transitional endoplasmic reticulum (tER) site and promotes its incorporation into coat protein complex II (COPII) vesicles. Associated with gurken, produces a signal received by torpedo resulting in a signaling pathway that first establishes posterior follicle cell fates and normal localization of the anterior and posterior determinants, later they act in a signaling event inducing dorsal follicle cell fates and regulating the dorsal-ventral pattern of egg and embryo. The chain is Protein cornichon (cni) from Drosophila virilis (Fruit fly).